Here is a 70-residue protein sequence, read N- to C-terminus: Large ribosomal subunit protein eL38 (70 aa).

It belongs to the eukaryotic ribosomal protein eL38 family.

The protein is Large ribosomal subunit protein eL38 (RpL38) of Drosophila melanogaster (Fruit fly).